Consider the following 917-residue polypeptide: MAISRRSLHAIILTVLLLAATAAPSQSGSRSRSRRKSERQSTNRGRDNNSIRGGVAQTPESSPLPALDLTPQPPMEKEEPDTLAPRASRDAPGTPKVPAMPGVTPEPSGNASEPADPAELRADLRGLKGSSDDPNFYVCPPPTGATVVRLEEPRPCPELPKGLNFTEGIAVTFKENLAPYKFKATMYYKAVTVASVWSGYSYNQFMNIFEDRAPIPFEEIVDRIHGRGMCLSTAKYVRNNLETTAFHNDADEHEMKLVPAESAPGLHRGWHTTRLKNNPTGSAWIHRHGTTVDCIVDEVEAKSSYPYNEFVLATGDFVYASPFFGYRDGSHSEHNAYAADRFKQVDGFFPRDFGTGRRHGSPVTYNLLTTPMFTVGWNWAPKRPSVCTMTKWREVPEMLRAEYGSSFRFTSNALSATFTTNLTQYSLSRVDLGDCVGKEAREAIDRIYLEKYNNTHLRVGSVQYYLATGGFLIAYQPLLSNNLADLYVKELMREQALKPEERKLNATTDGKVITTTSSVEFARLQFTYNHIQKHVNEMFGRMAVSWCELQNQELTLWNEAKKINPSAIASVTLHRRVSACMLGDVLAISTCVAVPAENVIMQNSMRIPSKPGTCYSRPLLSFKHVDGEELMEGQLGENNEIRLDRDAVEPCSVGHKRYFLFGAGYVYFEEYTYSHQLSRSDITAVSTFIDLNITMLEDHEFVPLEVYTRQEIKDSGLLDYAEVQRRNQLHALRFADIDTVIKADPNAAIFAGLHGFFEGLGDVGRAVGRVVLGVVGGVVATVSGVSSFLSNPFGALAIGLLVLGGLVAAFFAFRYVMRLQRNPMKALYPLTTKDLKHPSEGGGGEEAMEDFDEQKLDEARSMIKYMALVSAMERTKHKAGRRGGTSAILNARLTDMVMRKRGAKPKYEALPETDEDI.

Residues 1 to 22 form the signal peptide; sequence MAISRRSLHAIILTVLLLAATA. The segment covering 21 to 30 has biased composition (low complexity); that stretch reads TAAPSQSGSR. The segment at 21–117 is disordered; sequence TAAPSQSGSR…SGNASEPADP (97 aa). Residues 23-792 lie on the Virion surface side of the membrane; sequence APSQSGSRSR…SGVSSFLSNP (770 aa). Residues 38 to 49 show a composition bias toward basic and acidic residues; that stretch reads ERQSTNRGRDNN. 3 N-linked (GlcNAc...) asparagine; by host glycosylation sites follow: N48, N110, and N164. 5 disulfides stabilise this stretch: C139/C591, C156/C547, C230/C294, C387/C435, and C614/C651. Involved in fusion and/or binding to host membrane stretches follow at residues 196–202 and 281–288; these read VWSGYSY and GSAWIHRH. Residues N421, N453, and N505 are each glycosylated (N-linked (GlcNAc...) asparagine; by host). N-linked (GlcNAc...) asparagine; by host glycosylation occurs at N692. The hydrophobic membrane proximal region stretch occupies residues 737-790; it reads IDTVIKADPNAAIFAGLHGFFEGLGDVGRAVGRVVLGVVGGVVATVSGVSSFLS. The chain crosses the membrane as a helical span at residues 793-813; the sequence is FGALAIGLLVLGGLVAAFFAF. Residues 814–917 lie on the Intravirion side of the membrane; sequence RYVMRLQRNP…EALPETDEDI (104 aa). A Golgi targeting motif is present at residues 865–868; the sequence is YMAL. Residues 907–910 carry the Internalization motif motif; that stretch reads YEAL.

Belongs to the herpesviridae glycoprotein B family. As to quaternary structure, homotrimer; disulfide-linked. Binds to heparan sulfate proteoglycans. Interacts with gH/gL heterodimer. In terms of processing, a proteolytic cleavage by host furin generates two subunits that remain linked by disulfide bonds.

It is found in the virion membrane. The protein localises to the host cell membrane. The protein resides in the host endosome membrane. It localises to the host Golgi apparatus membrane. In terms of biological role, envelope glycoprotein that forms spikes at the surface of virion envelope. Essential for the initial attachment to heparan sulfate moieties of the host cell surface proteoglycans. Involved in fusion of viral and cellular membranes leading to virus entry into the host cell. Following initial binding to its host receptors, membrane fusion is mediated by the fusion machinery composed at least of gB and the heterodimer gH/gL. May be involved in the fusion between the virion envelope and the outer nuclear membrane during virion egress. The sequence is that of Envelope glycoprotein B from Bovine herpesvirus 2 (strain BMV) (BoHV-2).